We begin with the raw amino-acid sequence, 507 residues long: ATP synthase subunit alpha, chloroplastic (507 aa).

170–177 (GDRQTGKT) provides a ligand contact to ATP.

This sequence belongs to the ATPase alpha/beta chains family. In terms of assembly, F-type ATPases have 2 components, CF(1) - the catalytic core - and CF(0) - the membrane proton channel. CF(1) has five subunits: alpha(3), beta(3), gamma(1), delta(1), epsilon(1). CF(0) has four main subunits: a, b, b' and c.

It is found in the plastid. It localises to the chloroplast thylakoid membrane. The enzyme catalyses ATP + H2O + 4 H(+)(in) = ADP + phosphate + 5 H(+)(out). Its function is as follows. Produces ATP from ADP in the presence of a proton gradient across the membrane. The alpha chain is a regulatory subunit. In Buxus microphylla (Littleleaf boxwood), this protein is ATP synthase subunit alpha, chloroplastic.